The following is a 319-amino-acid chain: Ribosomal RNA small subunit methyltransferase H (319 aa).

S-adenosyl-L-methionine is bound by residues 52-54 (GGH), D70, F100, D126, and Q133. The disordered stretch occupies residues 289 to 319 (PKPLSPSELERQRNPRARSAKLRVAARSSQM).

It belongs to the methyltransferase superfamily. RsmH family.

It localises to the cytoplasm. The enzyme catalyses cytidine(1402) in 16S rRNA + S-adenosyl-L-methionine = N(4)-methylcytidine(1402) in 16S rRNA + S-adenosyl-L-homocysteine + H(+). Specifically methylates the N4 position of cytidine in position 1402 (C1402) of 16S rRNA. The polypeptide is Ribosomal RNA small subunit methyltransferase H (Synechococcus sp. (strain JA-2-3B'a(2-13)) (Cyanobacteria bacterium Yellowstone B-Prime)).